The primary structure comprises 167 residues: Putative 4-hydroxy-4-methyl-2-oxoglutarate aldolase (167 aa).

Residues 81 to 84 (GDII) and Arg103 each bind substrate. Asp104 contacts a divalent metal cation.

This sequence belongs to the class II aldolase/RraA-like family. As to quaternary structure, homotrimer. Requires a divalent metal cation as cofactor.

It carries out the reaction 4-hydroxy-4-methyl-2-oxoglutarate = 2 pyruvate. The catalysed reaction is oxaloacetate + H(+) = pyruvate + CO2. Catalyzes the aldol cleavage of 4-hydroxy-4-methyl-2-oxoglutarate (HMG) into 2 molecules of pyruvate. Also contains a secondary oxaloacetate (OAA) decarboxylase activity due to the common pyruvate enolate transition state formed following C-C bond cleavage in the retro-aldol and decarboxylation reactions. This is Putative 4-hydroxy-4-methyl-2-oxoglutarate aldolase from Corynebacterium jeikeium (strain K411).